The primary structure comprises 161 residues: MTQDELYMKEAIKEAKKAEEKGEVPIGAVLVINGEIIARAHNLRETEQRSIAHAEMLVIDEACKALGTWRLEGATLYVTLEPCPMCAGAVVLSRVEKVVFGAFDPKGGCSGTLMNLLQEERFNHQAEVVSGVLEEECGGMLSAFFRELRKKKKAARKNLSE.

Residues 2-120 (TQDELYMKEA…GTLMNLLQEE (119 aa)) enclose the CMP/dCMP-type deaminase domain. Position 53 (histidine 53) interacts with Zn(2+). Glutamate 55 (proton donor) is an active-site residue. Cysteine 83 and cysteine 86 together coordinate Zn(2+).

It belongs to the cytidine and deoxycytidylate deaminase family. In terms of assembly, homodimer. Zn(2+) is required as a cofactor.

It carries out the reaction adenosine(34) in tRNA + H2O + H(+) = inosine(34) in tRNA + NH4(+). Its function is as follows. Catalyzes the deamination of adenosine to inosine at the wobble position 34 of tRNA(Arg2). The polypeptide is tRNA-specific adenosine deaminase (Bacillus subtilis (strain 168)).